The following is a 426-amino-acid chain: Glutamate-1-semialdehyde 2,1-aminomutase (426 aa).

At Lys265 the chain carries N6-(pyridoxal phosphate)lysine.

Belongs to the class-III pyridoxal-phosphate-dependent aminotransferase family. HemL subfamily. Homodimer. Pyridoxal 5'-phosphate serves as cofactor.

The protein resides in the cytoplasm. It catalyses the reaction (S)-4-amino-5-oxopentanoate = 5-aminolevulinate. It functions in the pathway porphyrin-containing compound metabolism; protoporphyrin-IX biosynthesis; 5-aminolevulinate from L-glutamyl-tRNA(Glu): step 2/2. This Sodalis glossinidius (strain morsitans) protein is Glutamate-1-semialdehyde 2,1-aminomutase.